A 259-amino-acid chain; its full sequence is Phosphoadenosine 5'-phosphosulfate reductase (259 aa).

The Nucleophile; cysteine thiosulfonate intermediate role is filled by Cys244.

This sequence belongs to the PAPS reductase family. CysH subfamily.

The protein localises to the cytoplasm. The enzyme catalyses [thioredoxin]-disulfide + sulfite + adenosine 3',5'-bisphosphate + 2 H(+) = [thioredoxin]-dithiol + 3'-phosphoadenylyl sulfate. It participates in sulfur metabolism; hydrogen sulfide biosynthesis; sulfite from sulfate: step 3/3. In terms of biological role, catalyzes the formation of sulfite from phosphoadenosine 5'-phosphosulfate (PAPS) using thioredoxin as an electron donor. This chain is Phosphoadenosine 5'-phosphosulfate reductase, found in Vibrio parahaemolyticus serotype O3:K6 (strain RIMD 2210633).